We begin with the raw amino-acid sequence, 123 residues long: Defensin beta 118 (123 aa).

A signal peptide spans methionine 1–proline 19. 3 disulfide bridges follow: cysteine 27/cysteine 54, cysteine 34/cysteine 48, and cysteine 38/cysteine 55. Disordered regions lie at residues asparagine 59–glycine 79 and methionine 102–serine 123. A propeptide spanning residues glutamine 64–serine 123 is cleaved from the precursor. Residues proline 66–glycine 79 are compositionally biased toward low complexity.

The protein belongs to the beta-defensin family. In terms of processing, the three-dimensional structure formed by the three intramolecular disulfide bridges is indispensable for antimicrobial activity.

The protein resides in the secreted. Host defense peptide that exhibits antimicrobial activity against both Gram-negative bacteria, such as E.coli and S.typhimurium, and Gram-positive bacteria, such as S.aureus and B.subtilis. Inhibits cell adhesion of E.coli on intestinal epithelial enterocytes. Causes rapid permeabilization of both the outer and inner membrane of E.coli, leading to morphological alterations on the bacterial surface. Binds to bacterial lipopolysaccharides (LPS) with high affinity, and may thereby be involved in immunoregulation through LPS neutralization. May contribute to epididymal innate immunity and protect the sperm against attack by microorganisms. The polypeptide is Defensin beta 118 (DEFB118) (Hylobates lar (Lar gibbon)).